The following is a 230-amino-acid chain: NEDD8-conjugating enzyme Ubc12 (230 aa).

Positions 1-87 (MFRLKELQKK…AELRAQKDID (87 aa)) are disordered. The segment covering 10 to 20 (KQQQQQQQQQQ) has biased composition (low complexity). The segment covering 26 to 36 (TNGTDAVTTEP) has biased composition (polar residues). Residues 37–57 (TDVKRQNSNDLKEIRKQKSKD) show a composition bias toward basic and acidic residues. Polar residues predominate over residues 61-70 (SLKTKQSSES). The UBC core domain maps to 77 to 221 (PAELRAQKDI…VRQSLRGGYI (145 aa)). The active-site Glycyl thioester intermediate is Cys159.

The protein belongs to the ubiquitin-conjugating enzyme family. UBC12 subfamily.

It catalyses the reaction [E1 NEDD8-activating enzyme]-S-[NEDD8 protein]-yl-L-cysteine + [E2 NEDD8-conjugating enzyme]-L-cysteine = [E1 NEDD8-activating enzyme]-L-cysteine + [E2 NEDD8-conjugating enzyme]-S-[NEDD8-protein]-yl-L-cysteine.. It functions in the pathway protein modification; protein neddylation. In terms of biological role, accepts the ubiquitin-like protein nedd8 from the uba3-nae1 E1 complex and catalyzes its covalent attachment to other proteins. The sequence is that of NEDD8-conjugating enzyme Ubc12 (ube2m) from Dictyostelium discoideum (Social amoeba).